Reading from the N-terminus, the 879-residue chain is Protein P (879 aa).

The segment at 1 to 184 (MHPFSRLFRN…GKPYSWEHRQ (184 aa)) is terminal protein domain (TP). The tract at residues 185–382 (LVQHNGQQHK…YCIHHIVSSI (198 aa)) is spacer. The segment at 304 to 345 (SASNSNKSRSREKAYSSNSTSKRYSPPLNYEKSDFSSPGVRG) is disordered. The polymerase/reverse transcriptase domain (RT) stretch occupies residues 383–724 (DDWGPCTVTG…YEELWPVVRQ (342 aa)). A Reverse transcriptase domain is found at 393-634 (DVTIKSPRTP…NHLHFMGYVI (242 aa)). Residues Asp-465, Asp-585, and Asp-586 each contribute to the Mg(2+) site.

This sequence belongs to the hepadnaviridae P protein family.

It catalyses the reaction DNA(n) + a 2'-deoxyribonucleoside 5'-triphosphate = DNA(n+1) + diphosphate. The catalysed reaction is Endonucleolytic cleavage to 5'-phosphomonoester.. Its activity is regulated as follows. Activated by host HSP70 and HSP40 in vitro to be able to bind the epsilon loop of the pgRNA. Because deletion of the RNase H region renders the protein partly chaperone-independent, the chaperones may be needed indirectly to relieve occlusion of the RNA-binding site by this domain. Inhibited by several reverse-transcriptase inhibitors: Lamivudine, Adefovir and Entecavir. Multifunctional enzyme that converts the viral RNA genome into dsDNA in viral cytoplasmic capsids. This enzyme displays a DNA polymerase activity that can copy either DNA or RNA templates, and a ribonuclease H (RNase H) activity that cleaves the RNA strand of RNA-DNA heteroduplexes in a partially processive 3'- to 5'-endonucleasic mode. Neo-synthesized pregenomic RNA (pgRNA) are encapsidated together with the P protein, and reverse-transcribed inside the nucleocapsid. Initiation of reverse-transcription occurs first by binding the epsilon loop on the pgRNA genome, and is initiated by protein priming, thereby the 5'-end of (-)DNA is covalently linked to P protein. Partial (+)DNA is synthesized from the (-)DNA template and generates the relaxed circular DNA (RC-DNA) genome. After budding and infection, the RC-DNA migrates in the nucleus, and is converted into a plasmid-like covalently closed circular DNA (cccDNA). The activity of P protein does not seem to be necessary for cccDNA generation, and is presumably released from (+)DNA by host nuclear DNA repair machinery. The sequence is that of Protein P from Woodchuck hepatitis B virus (isolate 1) (WHV).